Consider the following 142-residue polypeptide: Hemoglobin subunit alpha-2 (142 aa).

Residues 2-142 (VLSPADKTNV…VSTVLTSKYR (141 aa)) form the Globin domain. O2 is bound at residue H59. Position 88 (H88) interacts with heme b.

This sequence belongs to the globin family. Heterotetramer of two alpha chains and two beta chains. As to expression, red blood cells.

Functionally, involved in oxygen transport from the lung to the various peripheral tissues. The sequence is that of Hemoglobin subunit alpha-2 from Arctocephalus galapagoensis (Galapagoes fur seal).